Reading from the N-terminus, the 1064-residue chain is MSFNVPKEEEKIVEFWREIDAFHTQLKLSQGRPTYTFFDGPPFATGRPHHGHLLASTIKDSVTRYACLKGYHVERRFGWDTHGLPVEHEIDKKLGITGSDDVMAMGIDKYNAECRKIVMTYASEWRATVERLGRWIDFDNDYKTLYPSFMESVWWVFKELHTKGKVYRGYRVMPYSTACTTPLSNFEAQQNYKEVPDPAIVVAFQSISDPEVSFLAWTTTPWTLPSNLALAVHPDLQYIKILDKDSNKKYILMESCLGILYKNPKKANFEILERFQGKALDGQKYEPLFPYFKSTFGERAFKLYSADYVEEGSGTGIVHQAPAFGEADYDAAWAAGIIDADHQPPCPVDEQGLLTSEITDFAGQYVKDADKEIIRSLKASGHLVKHSQIFHSYPFCWRSDTPLIYRAVPSWFVRVKEITNEMVENVMSTHWVPQNIRDKRFANWLKNARDWNISRNRYWGTPIPLWVSDDYEEVVCIGSIKELEELSGVSNITDIHRDSIDHITIPSKKGKGTLHRVSEVFDCWFESGSMPYASRHYPFERIEEFKHGFPADFISEGVDQTRGWFYTLTVLGTLLFDKAPYKNVIVSGLVMAEDGKKMSKRLKNYPEPNLIIEKYGSDALRLYLINSPVVRAEILKFKEDGVREVVTRVLIPWWNSYKFFEAQAALYKKVTGKDFVFDDAATLSSNVMDRWILARCQSLIGFVDEEMKQYRLYTVVPQLLGLIEEMTNWYIRFNRRRLKGEDGEIETINALNVLFEVLFTLVRIMGPFTPFITENIYQHLRNYMPIDKNEISLRSVHFLPFPTYKSELDDETVLRRVKRMQTIIELARYVREQNNISLKTPLKTLIVILTNEEYLEDAKLLERYIAEELNVREVVFTSNEEKYGVVYSVQADWPVLGKKLRKDMARVKKALPNVTSEEVKEFQKNKKMVLDGIELVEGDLQIIRSVEVKNEFLKSNTDGICIVLLDIEIDAQLQAEGLAREVINRVQRLRKKSNLQVTDDVRMTYKIKNDTIGLESAVDSNEALFSKVLRRPIEKETGADESNIIASEEQDVQGATFLLSLLRL.

The 'HIGH' region motif lies at 42–52 (PFATGRPHHGH). The short motif at 597-601 (KMSKR) is the 'KMSKS' region element. Residue K600 coordinates ATP.

Belongs to the class-I aminoacyl-tRNA synthetase family.

Its subcellular location is the cytoplasm. The catalysed reaction is tRNA(Ile) + L-isoleucine + ATP = L-isoleucyl-tRNA(Ile) + AMP + diphosphate. The polypeptide is Isoleucine--tRNA ligase, cytoplasmic (irs1) (Schizosaccharomyces pombe (strain 972 / ATCC 24843) (Fission yeast)).